Consider the following 1058-residue polypeptide: Ubiquitin-like modifier-activating enzyme 1 (1058 aa).

The segment at 1–47 (MSSSPLSKKRRVSGPDPKPGSNCSPAQSVLSEVPSVPTNGMAKNGSE) is disordered. S2 bears the N-acetylserine mark. Residue S2 is modified to N-acetylalanine. A Phosphoserine modification is found at S4. The short motif at 5-11 (PLSKKRR) is the Nuclear localization signal element. A phosphoserine mark is found at S13, S21, S24, and S46. A compositionally biased stretch (polar residues) spans 21-30 (SNCSPAQSVL). Y55 is subject to Phosphotyrosine. 2 consecutive repeat copies span residues 63-199 (GHEA…GQLF) and 459-611 (GSDL…QVVI). The interval 63–611 (GHEAMKRLQT…GTKGNVQVVI (549 aa)) is 2 approximate repeats. Residues A478, D504, R515, K528, and 576-577 (DN) contribute to the ATP site. K528 carries the N6-succinyllysine modification. The Glycyl thioester intermediate role is filled by C632. K671 carries the post-translational modification N6-acetyllysine. T800 bears the Phosphothreonine mark. 4 positions are modified to phosphoserine: S810, S816, S820, and S835. The residue at position 980 (K980) is an N6-acetyllysine.

This sequence belongs to the ubiquitin-activating E1 family. As to quaternary structure, monomer. Interacts with GAN (via BTB domain). ISGylated. As to expression, detected in erythrocytes (at protein level). Ubiquitous.

It is found in the cytoplasm. The protein localises to the mitochondrion. Its subcellular location is the nucleus. The enzyme catalyses ATP + ubiquitin + [E1 ubiquitin-activating enzyme]-L-cysteine = AMP + diphosphate + S-ubiquitinyl-[E1 ubiquitin-activating enzyme]-L-cysteine.. It participates in protein modification; protein ubiquitination. In terms of biological role, catalyzes the first step in ubiquitin conjugation to mark cellular proteins for degradation through the ubiquitin-proteasome system. Activates ubiquitin by first adenylating its C-terminal glycine residue with ATP, and thereafter linking this residue to the side chain of a cysteine residue in E1, yielding a ubiquitin-E1 thioester and free AMP. Essential for the formation of radiation-induced foci, timely DNA repair and for response to replication stress. Promotes the recruitment of TP53BP1 and BRCA1 at DNA damage sites. In Homo sapiens (Human), this protein is Ubiquitin-like modifier-activating enzyme 1 (UBA1).